The sequence spans 184 residues: Photosystem I assembly protein Ycf4 (184 aa).

The next 2 membrane-spanning stretches (helical) occupy residues 24-44 and 57-77; these read WAFI…SSYI and IIFF…LFIS.

Belongs to the Ycf4 family.

Its subcellular location is the plastid. It is found in the chloroplast thylakoid membrane. Seems to be required for the assembly of the photosystem I complex. The polypeptide is Photosystem I assembly protein Ycf4 (Buxus microphylla (Littleleaf boxwood)).